Reading from the N-terminus, the 395-residue chain is G-protein coupled receptor 182 (395 aa).

Residues 1-53 (MSVIPSSRPVSTLAPDNDFREIHNWTELLHLFNQTFSDCHMELNENTKQVVLF) lie on the Extracellular side of the membrane. N24 and N33 each carry an N-linked (GlcNAc...) asparagine glycan. Residues 54–75 (VFYLAIFVVGLVENVLVICVNC) traverse the membrane as a helical segment. The Cytoplasmic portion of the chain corresponds to 76-86 (RRSGRVGMLNL). The chain crosses the membrane as a helical span at residues 87–109 (YILNMAVADLGIILSLPVWMLEV). Residues 110 to 123 (MLEYTWLWGSFSCR) are Extracellular-facing. A disulfide bond links C122 and C198. Residues 124–145 (FIHYFYLANMYSSIFFLTCLSI) traverse the membrane as a helical segment. Residues 146–166 (DRYVTLTNTSPSWQRHQHRIR) lie on the Cytoplasmic side of the membrane. Residues 167 to 189 (RAVCAGVWVLSAIIPLPEVVHIQ) traverse the membrane as a helical segment. The Extracellular portion of the chain corresponds to 190–213 (LLDGSEPMCLFLAPFETYSAWALA). Residues 214-235 (VALSATILGFLLPFPLIAVFNI) form a helical membrane-spanning segment. Residues 236-254 (LSACRLRRQGQTESRRHCL) lie on the Cytoplasmic side of the membrane. A helical transmembrane segment spans residues 255–276 (LMWAYIVVFVICWLPYHVTMLL). Residues 277-295 (LTLHTTHIFLHCNLVNFLY) are Extracellular-facing. A helical transmembrane segment spans residues 296 to 316 (FFYEIIDCFSMLHCVANPILY). Residues 317 to 395 (NFLSPSFRGR…RTPHLHSAIP (79 aa)) are Cytoplasmic-facing. At S329 the chain carries Phosphoserine.

It belongs to the G-protein coupled receptor 1 family. As to expression, expressed in a wide variety of peripheral tissues in the adult rat with prominent expression in lung, testis, adrenal and liver.

The protein resides in the cell membrane. Functionally, orphan receptor. In Rattus norvegicus (Rat), this protein is G-protein coupled receptor 182 (Gpr182).